A 476-amino-acid chain; its full sequence is MPLAEGSTFAGFTIVRQLGSGGMGEVYLARHPRLPRQDALKVLRADVSADGEYRARFNREADAAASLWHPHIVAVHDRGEFDGQLWIDMDFVDGTDTVSLLRDRYPNGMPGPEVTEIITAVAEALDYAHERRLLHRDVKPANILIANPDSPDRRIMLADFGIAGWVDDPSGLTATNMTVGTVSYAAPEQLMGNELDGRADQYALAATAFHLLTGSPPFQHANPAVVISQHLSASPPAIGDRVPELTPLDPVFAKALAKQPKDRYQRCVDFARALGHRLGGAGDPDDTRVSQPVAVAAPAKRSLLRTAVIVPAVLAMLLVMAVAVAVREFQRADDERAAQPARTRTTTSAGTTTSVAPASTTRPAPTTPTTTGAADTATASPTAAVVAIGALCFPLGSTGTTKTGATAYCSTLQGTNTTIWSLTEDTVASPTVTATADPTEAPLPIEQESPIRVCMQQTGQTRRECREEIRRSNGWP.

Positions Phe-12–Gly-279 constitute a Protein kinase domain. Residues Leu-18 to Val-26 and Lys-41 contribute to the ATP site. Catalysis depends on Asp-137, which acts as the Proton acceptor. A helical transmembrane segment spans residues Thr-306–Val-326. The tract at residues Ala-332–Thr-376 is disordered. Residues Ala-338 to Thr-376 are compositionally biased toward low complexity.

It belongs to the protein kinase superfamily. Ser/Thr protein kinase family. Post-translationally, autophosphorylated. Dephosphorylated by PstP.

Its subcellular location is the cell membrane. It catalyses the reaction L-seryl-[protein] + ATP = O-phospho-L-seryl-[protein] + ADP + H(+). The enzyme catalyses L-threonyl-[protein] + ATP = O-phospho-L-threonyl-[protein] + ADP + H(+). In terms of biological role, a serine/threonine-protein kinase, acts on HupB in vitro. The polypeptide is Serine/threonine-protein kinase PknF (Mycobacterium tuberculosis (strain ATCC 25177 / H37Ra)).